The chain runs to 433 residues: sn-glycerol-3-phosphate-binding periplasmic protein UgpB (433 aa).

Positions 1-25 (MFTRLITTSVLTGAIALTIGSQAFA) are cleaved as a signal peptide. 7 residues coordinate sn-glycerol 3-phosphate: Tyr67, Asp91, Ser146, Ser273, Gly307, Tyr346, and Arg397.

Belongs to the bacterial solute-binding protein 1 family. In terms of assembly, the complex is composed of two ATP-binding proteins (UgpC), two transmembrane proteins (UgpA and UgpE) and a solute-binding protein (UgpB).

It is found in the periplasm. Functionally, part of the ABC transporter complex UgpBAEC involved in sn-glycerol-3-phosphate (G3P) import. Binds G3P. This is sn-glycerol-3-phosphate-binding periplasmic protein UgpB (ugpB) from Brucella abortus (strain 2308).